The primary structure comprises 820 residues: Leucine--tRNA ligase (820 aa).

A 'HIGH' region motif is present at residues 42–52; that stretch reads PYPSGDLHMGH. Positions 576-580 match the 'KMSKS' region motif; the sequence is KMSKS. Lys579 is an ATP binding site.

The protein belongs to the class-I aminoacyl-tRNA synthetase family.

Its subcellular location is the cytoplasm. The enzyme catalyses tRNA(Leu) + L-leucine + ATP = L-leucyl-tRNA(Leu) + AMP + diphosphate. This is Leucine--tRNA ligase from Coxiella burnetii (strain Dugway 5J108-111).